Here is a 281-residue protein sequence, read N- to C-terminus: MSLASLETTINGAFDARETVTAATKGEVREAVDHALDLLDKGEVRVAERAADGKWTVNQWLKKAVLLSFRLNDMSVIPGGPGKAVWWDKVPSKFEGWDENRFRDAGFRAVPGAIVRRSAYIAKNAVLMPSFVNLGAYVDESTMVDTWCTVGSCAQIGKRVHISGGAGIGGVLEPLQAGPVIIEDDCFIGARSEVAEGVIVRKGAVLSMGVFLGASTKIVDRETGEIFMGEVPEYAVVVPGALPGKPLKNGQPGPSTACAVIVKRVDERTRSKTGINELLRD.

Residues Arg108 and Asp145 each coordinate substrate.

It belongs to the transferase hexapeptide repeat family. In terms of assembly, homotrimer.

The protein resides in the cytoplasm. It carries out the reaction (S)-2,3,4,5-tetrahydrodipicolinate + succinyl-CoA + H2O = (S)-2-succinylamino-6-oxoheptanedioate + CoA. It participates in amino-acid biosynthesis; L-lysine biosynthesis via DAP pathway; LL-2,6-diaminopimelate from (S)-tetrahydrodipicolinate (succinylase route): step 1/3. This Nitrobacter hamburgensis (strain DSM 10229 / NCIMB 13809 / X14) protein is 2,3,4,5-tetrahydropyridine-2,6-dicarboxylate N-succinyltransferase.